The sequence spans 379 residues: Intracellular hyaluronan-binding protein 4.S (379 aa).

Disordered regions lie at residues 52 to 260 (THRK…FSQE) and 332 to 379 (SLAR…PALA). Residues 71–81 (GKKESQKDRKA) are compositionally biased toward basic and acidic residues. A compositionally biased stretch (polar residues) spans 107 to 116 (KVTQNENVDS). Composition is skewed to basic and acidic residues over residues 118-133 (VKVDRTERRTAFREVR) and 139-158 (RSAEYSIEKPMEIMDQDKQM). Over residues 162-174 (GGRGGMRGRGRGG) the composition is skewed to gly residues. Over residues 179–208 (TESDNLRGKREFDRHSGSDRARMRPEDKRG) the composition is skewed to basic and acidic residues. Acidic residues-rich tracts occupy residues 232–241 (EQVETTETEA) and 368–379 (NPDDPEDFPALA).

The protein belongs to the SERBP1-HABP4 family. Associates with ribosomes; promoting ribosome stabilization. Interacts with eef2/eEF2; promoting ribosome stabilization.

Its subcellular location is the nucleus. The protein resides in the cytoplasm. The protein localises to the stress granule. It localises to the nucleolus. It is found in the nucleus speckle. Its subcellular location is the cajal body. In terms of biological role, ribosome-binding protein that promotes ribosome hibernation, a process during which ribosomes are stabilized in an inactive state and preserved from proteasomal degradation. Acts via its association with eef2/eEF2 factor at the A-site of the ribosome, promoting ribosome stabilization in an inactive state compatible with storage. Plays a key role in ribosome hibernation in the mature egg by promoting ribosome stabilization. Ribosomes, which are produced in large quantities during oogenesis, are stored and translationally repressed in the egg and early embryo. The polypeptide is Intracellular hyaluronan-binding protein 4.S (Xenopus laevis (African clawed frog)).